The chain runs to 406 residues: MRVDLTITNLSEIVSPKGKPPVCGKNMSQLSIRKNKNIAIKDGKIVYIGSEIPPALRTINANGAIALPGLVDPHTHIPFTGNRAHEFIMRLHGKSYMEIMQAGGGILSTVKAVRKASLKELVLRGAYALNEMLKLGVTTVEGKSGYGLEKTAEIKQLKALKLLNKVQLVDVIPTFLGAHALPEEFEDKKEYLNYLSNMLKDVREYTDTVDIFCEKGVFEVEESREFLERAKAMGFRLRLHADELAPSGAGKLAVELGAVSADHLISADDETLEAISKSATTAVILPGTSFFLKERFARGRKMIDLGSAVALASDFNPGSCNIYDPYLIMHLAVTRCGLEIEEAVTAYTINAAHILNLSNRKGKIEEGYDADIVLLGLNSYTEIPYMFSRITVVSVIKSGRVVFHES.

Residues His74 and His76 each contribute to the Fe(3+) site. Residues His74 and His76 each contribute to the Zn(2+) site. Positions 83, 146, and 179 each coordinate 4-imidazolone-5-propanoate. Tyr146 is an N-formimidoyl-L-glutamate binding site. His240 serves as a coordination point for Fe(3+). Zn(2+) is bound at residue His240. Glu243 is a binding site for 4-imidazolone-5-propanoate. A Fe(3+)-binding site is contributed by Asp314. Asp314 is a binding site for Zn(2+). The N-formimidoyl-L-glutamate site is built by Asn316 and Gly318. Ser319 is a binding site for 4-imidazolone-5-propanoate.

The protein belongs to the metallo-dependent hydrolases superfamily. HutI family. It depends on Zn(2+) as a cofactor. Requires Fe(3+) as cofactor.

It localises to the cytoplasm. It catalyses the reaction 4-imidazolone-5-propanoate + H2O = N-formimidoyl-L-glutamate. Its pathway is amino-acid degradation; L-histidine degradation into L-glutamate; N-formimidoyl-L-glutamate from L-histidine: step 3/3. Catalyzes the hydrolytic cleavage of the carbon-nitrogen bond in imidazolone-5-propanoate to yield N-formimidoyl-L-glutamate. It is the third step in the universal histidine degradation pathway. This chain is Imidazolonepropionase, found in Kosmotoga olearia (strain ATCC BAA-1733 / DSM 21960 / TBF 19.5.1).